A 243-amino-acid polypeptide reads, in one-letter code: tRNA (guanine-N(1)-)-methyltransferase (243 aa).

S-adenosyl-L-methionine contacts are provided by residues Gly-110 and 130-135; that span reads VGDYVM.

The protein belongs to the RNA methyltransferase TrmD family. In terms of assembly, homodimer.

Its subcellular location is the cytoplasm. It catalyses the reaction guanosine(37) in tRNA + S-adenosyl-L-methionine = N(1)-methylguanosine(37) in tRNA + S-adenosyl-L-homocysteine + H(+). Its function is as follows. Specifically methylates guanosine-37 in various tRNAs. The sequence is that of tRNA (guanine-N(1)-)-methyltransferase from Treponema denticola (strain ATCC 35405 / DSM 14222 / CIP 103919 / JCM 8153 / KCTC 15104).